A 190-amino-acid chain; its full sequence is Vascular endothelial growth factor A (190 aa).

Residues 1–26 form the signal peptide; it reads MNFLLSWVHWSLALLLYLHHAKWSQA. Intrachain disulfides connect Cys51–Cys93, Cys82–Cys127, and Cys86–Cys129. An N-linked (GlcNAc...) asparagine glycan is attached at Asn100.

Belongs to the PDGF/VEGF growth factor family. As to quaternary structure, homodimer; disulfide-linked. Also found as heterodimer with PGF. Interacts with NRP1. Interacts with BSG. Interacts with CD82; this interaction inhibits VEGFA-mediated signaling pathway.

Its subcellular location is the secreted. Functionally, growth factor active in angiogenesis, vasculogenesis and endothelial cell growth. Induces endothelial cell proliferation, promotes cell migration, inhibits apoptosis and induces permeabilization of blood vessels. Binds to the FLT1/VEGFR1 and KDR/VEGFR2 receptors, heparan sulfate and heparin. Binding to NRP1 receptor initiates a signaling pathway needed for motor neuron axon guidance and cell body migration, including for the caudal migration of facial motor neurons from rhombomere 4 to rhombomere 6 during embryonic development. Also binds the DEAR/FBXW7-AS1 receptor. In Bos taurus (Bovine), this protein is Vascular endothelial growth factor A (VEGFA).